A 570-amino-acid chain; its full sequence is Hydroxylamine reductase (570 aa).

C5, C8, C17, and C23 together coordinate [4Fe-4S] cluster. Hybrid [4Fe-2O-2S] cluster contacts are provided by H266, E290, C334, C425, C453, C478, E513, and K515. A Cysteine persulfide modification is found at C425.

This sequence belongs to the HCP family. It depends on [4Fe-4S] cluster as a cofactor. Requires hybrid [4Fe-2O-2S] cluster as cofactor.

It localises to the cytoplasm. It catalyses the reaction A + NH4(+) + H2O = hydroxylamine + AH2 + H(+). In terms of biological role, catalyzes the reduction of hydroxylamine to form NH(3) and H(2)O. This is Hydroxylamine reductase from Clostridium botulinum (strain Loch Maree / Type A3).